The chain runs to 404 residues: Deoxyguanosinetriphosphate triphosphohydrolase-like protein (404 aa).

The segment at 1–33 (MSVGMAAPRAAYGCDPDRSRGRQFAEPPSNNRS) is disordered. In terms of domain architecture, HD spans 69-217 (RLTHSLEVAQ…AAIADDIAYD (149 aa)).

This sequence belongs to the dGTPase family. Type 2 subfamily.

This is Deoxyguanosinetriphosphate triphosphohydrolase-like protein from Rhodopseudomonas palustris (strain BisB5).